A 108-amino-acid polypeptide reads, in one-letter code: Ig kappa chain V-V region MOPC 173 (108 aa).

The framework-1 stretch occupies residues Asp-1–Cys-23. Cysteines 23 and 88 form a disulfide. The complementarity-determining-1 stretch occupies residues Ser-24–Asx-34. Positions Trp-35–Tyr-49 are framework-2. The complementarity-determining-2 stretch occupies residues Tyr-50–Ser-56. The segment at Gly-57–Cys-88 is framework-3. The interval Gln-89–Thr-97 is complementarity-determining-3. The interval Phe-98–Arg-108 is framework-4.

This is Ig kappa chain V-V region MOPC 173 from Mus musculus (Mouse).